We begin with the raw amino-acid sequence, 881 residues long: Protein P (881 aa).

Residues 1 to 184 (MHPFYQLFRN…GKPYSWEHRQ (184 aa)) are terminal protein domain (TP). The tract at residues 185–384 (LEQHNGQQHK…YCLHHIVSSI (200 aa)) is spacer. Residues 263 to 351 (IPCESKAPSE…PAGICRGTES (89 aa)) are disordered. 2 stretches are compositionally biased toward polar residues: residues 270–279 (PSEQQQSSLR) and 287–314 (NQIQ…IQSG). Positions 326-340 (FERHTPSFDNEKSDR) are enriched in basic and acidic residues. The segment at 385-726 (DDWGPCTFDG…YGELWPVARQ (342 aa)) is polymerase/reverse transcriptase domain (RT). Residues 395–636 (DVTIRSPRTP…HTLHFMGYTI (242 aa)) form the Reverse transcriptase domain. Positions 467, 587, and 588 each coordinate Mg(2+).

It belongs to the hepadnaviridae P protein family.

It catalyses the reaction DNA(n) + a 2'-deoxyribonucleoside 5'-triphosphate = DNA(n+1) + diphosphate. It carries out the reaction Endonucleolytic cleavage to 5'-phosphomonoester.. With respect to regulation, activated by host HSP70 and HSP40 in vitro to be able to bind the epsilon loop of the pgRNA. Because deletion of the RNase H region renders the protein partly chaperone-independent, the chaperones may be needed indirectly to relieve occlusion of the RNA-binding site by this domain. Inhibited by several reverse-transcriptase inhibitors: Lamivudine, Adefovir and Entecavir. Its function is as follows. Multifunctional enzyme that converts the viral RNA genome into dsDNA in viral cytoplasmic capsids. This enzyme displays a DNA polymerase activity that can copy either DNA or RNA templates, and a ribonuclease H (RNase H) activity that cleaves the RNA strand of RNA-DNA heteroduplexes in a partially processive 3'- to 5'-endonucleasic mode. Neo-synthesized pregenomic RNA (pgRNA) are encapsidated together with the P protein, and reverse-transcribed inside the nucleocapsid. Initiation of reverse-transcription occurs first by binding the epsilon loop on the pgRNA genome, and is initiated by protein priming, thereby the 5'-end of (-)DNA is covalently linked to P protein. Partial (+)DNA is synthesized from the (-)DNA template and generates the relaxed circular DNA (RC-DNA) genome. After budding and infection, the RC-DNA migrates in the nucleus, and is converted into a plasmid-like covalently closed circular DNA (cccDNA). The activity of P protein does not seem to be necessary for cccDNA generation, and is presumably released from (+)DNA by host nuclear DNA repair machinery. The chain is Protein P from Ground squirrel hepatitis virus (strain 27) (GSHV).